Here is a 931-residue protein sequence, read N- to C-terminus: Probable UDP-N-acetylglucosamine--peptide N-acetylglucosaminyltransferase SPINDLY (931 aa).

The segment covering 1 to 15 (MAWTEKDVENGKESE) has biased composition (basic and acidic residues). The tract at residues 1–38 (MAWTEKDVENGKESESLGNNGFLKGGQSSSGSKGSPGR) is disordered. The segment covering 25–37 (GGQSSSGSKGSPG) has biased composition (low complexity). TPR repeat units lie at residues 48–81 (DKDA…DSKS), 82–115 (IESL…DPQN), 116–149 (ACAL…DPSY), 157–190 (AIVL…DSHY), 191–224 (APAY…RPMY), 225–258 (AEAY…SPNF), 266–299 (AIAL…NWHY), 300–333 (ADAM…NPHC), 334–367 (AEAC…KPNF), 369–401 (QSLN…NPTY), and 402–435 (AEAY…DPDS). Residues 436–931 (RNAGQNRLLA…NHNGNHGNLS (496 aa)) are catalytic region. Over residues 864–884 (QQQQTQTESVVPEESSVNPSE) the composition is skewed to low complexity. Positions 864-931 (QQQQTQTESV…NHNGNHGNLS (68 aa)) are disordered. Residues 910–931 (KSSTSEENGVQSNHNGNHGNLS) show a composition bias toward polar residues.

Belongs to the glycosyltransferase 41 family. O-GlcNAc transferase subfamily.

The protein resides in the nucleus. It catalyses the reaction L-seryl-[protein] + UDP-N-acetyl-alpha-D-glucosamine = 3-O-(N-acetyl-beta-D-glucosaminyl)-L-seryl-[protein] + UDP + H(+). The enzyme catalyses L-threonyl-[protein] + UDP-N-acetyl-alpha-D-glucosamine = 3-O-(N-acetyl-beta-D-glucosaminyl)-L-threonyl-[protein] + UDP + H(+). It participates in protein modification; protein glycosylation. In terms of biological role, probable O-linked N-acetylglucosamine transferase (OGT) involved in various processes such as gibberellin (GA) signaling pathway. OGTs catalyze the addition of nucleotide-activated sugars directly onto the polypeptide through O-glycosidic linkage with the hydroxyl of serine or threonine. Probably acts by adding O-linked sugars to yet unknown proteins. In Solanum lycopersicum (Tomato), this protein is Probable UDP-N-acetylglucosamine--peptide N-acetylglucosaminyltransferase SPINDLY (SPY).